The sequence spans 128 residues: Aspartate 1-decarboxylase (128 aa).

The Schiff-base intermediate with substrate; via pyruvic acid role is filled by Ser-25. Residue Ser-25 is modified to Pyruvic acid (Ser). Thr-57 contacts substrate. Tyr-58 acts as the Proton donor in catalysis. Residue 73–75 participates in substrate binding; it reads GAA.

The protein belongs to the PanD family. In terms of assembly, heterooctamer of four alpha and four beta subunits. The cofactor is pyruvate. Post-translationally, is synthesized initially as an inactive proenzyme, which is activated by self-cleavage at a specific serine bond to produce a beta-subunit with a hydroxyl group at its C-terminus and an alpha-subunit with a pyruvoyl group at its N-terminus.

It is found in the cytoplasm. It carries out the reaction L-aspartate + H(+) = beta-alanine + CO2. It functions in the pathway cofactor biosynthesis; (R)-pantothenate biosynthesis; beta-alanine from L-aspartate: step 1/1. In terms of biological role, catalyzes the pyruvoyl-dependent decarboxylation of aspartate to produce beta-alanine. This chain is Aspartate 1-decarboxylase, found in Chlorobium phaeovibrioides (strain DSM 265 / 1930) (Prosthecochloris vibrioformis (strain DSM 265)).